A 507-amino-acid polypeptide reads, in one-letter code: ATP synthase subunit alpha, mitochondrial (507 aa).

Residue 171–178 (GDRQTGKT) participates in ATP binding.

It belongs to the ATPase alpha/beta chains family. F-type ATPases have 2 components, CF(1) - the catalytic core - and CF(0) - the membrane proton channel. CF(1) has five subunits: alpha(3), beta(3), gamma(1), delta(1), epsilon(1). CF(0) has three main subunits: a, b and c.

The protein localises to the mitochondrion. The protein resides in the mitochondrion inner membrane. In terms of biological role, mitochondrial membrane ATP synthase (F(1)F(0) ATP synthase or Complex V) produces ATP from ADP in the presence of a proton gradient across the membrane which is generated by electron transport complexes of the respiratory chain. F-type ATPases consist of two structural domains, F(1) - containing the extramembraneous catalytic core, and F(0) - containing the membrane proton channel, linked together by a central stalk and a peripheral stalk. During catalysis, ATP synthesis in the catalytic domain of F(1) is coupled via a rotary mechanism of the central stalk subunits to proton translocation. Subunits alpha and beta form the catalytic core in F(1). Rotation of the central stalk against the surrounding alpha(3)beta(3) subunits leads to hydrolysis of ATP in three separate catalytic sites on the beta subunits. Subunit alpha does not bear the catalytic high-affinity ATP-binding sites. This chain is ATP synthase subunit alpha, mitochondrial (ATPA), found in Brassica napus (Rape).